The following is a 97-amino-acid chain: MNGEVESRLRKYLERDKNGLRRELLRVLLEGKKFTTSEIHDILSRRGYSISPRGVSAMVGLISARLGILKTELGEKNRYYLKSEYADLVRKIVEEFE.

This is an uncharacterized protein from Archaeoglobus fulgidus (strain ATCC 49558 / DSM 4304 / JCM 9628 / NBRC 100126 / VC-16).